The following is an 850-amino-acid chain: Mitochondrial escape protein 2 (850 aa).

Residues 1–44 (MLLVRTTSLNVSRMPVPCLARGIGILKGKYRLANLMNAQPSVRH) constitute a mitochondrion transit peptide. Residues 44–66 (HVSSEIQQKDQQAGESNTATDTG) are disordered. Topologically, residues 45–287 (VSSEIQQKDQ…VSNFFTNHTR (243 aa)) are mitochondrial matrix. Residues 47-64 (SEIQQKDQQAGESNTATD) are compositionally biased toward polar residues. An RRM domain is found at 198 to 272 (TTIVIKFQGP…TVLHIQYENI (75 aa)). The chain crosses the membrane as a helical span at residues 288–308 (IAIPVLFALLSIFAVLVFDPI). Residues 309-850 (REFSIEQKIT…CEEEIKNLSK (542 aa)) lie on the Mitochondrial intermembrane side of the membrane. The span at 607 to 621 (KGENVKEPESEKETA) shows a compositional bias: basic and acidic residues. The disordered stretch occupies residues 607–633 (KGENVKEPESEKETAENNDSDSEADTS).

The protein belongs to the YME2 family.

It is found in the mitochondrion inner membrane. Its function is as follows. Plays a role in maintaining the mitochondrial genome and in controlling the mtDNA escape. Involved in the regulation of mtDNA nucleotide structure and number. May have a dispensable role in early maturation of pre-rRNA. The polypeptide is Mitochondrial escape protein 2 (YME2) (Saccharomyces cerevisiae (strain ATCC 204508 / S288c) (Baker's yeast)).